The following is a 1840-amino-acid chain: MDVHTRWKDRLPVGPAAVPPLLLLLLLLWAPPQSRAAQPTDLLEMLDFHNLPSGVTKTTGFCATRRSSRGPDVAYRVSKDAQLSMPRKQLYPDSDFAEDFSILTTVKAKKGSQAFLVSVYNEQGIQQVGMELGRSPVFLYEDHTGKPGPEEYPLFPGINLSDGKWHRIAISVYRKNVTLILDCKKKVVKFLNRSDHPIIDVNGIIMFGSRILDDEIFEGDIQQLLFVSDHRAAYDYCEHYSPDCDTAVPDTPQSQDPNPDEYYPEGDGETYYYEYPYYEDPEDLGKEPAPTQKPVEAARETTEVPEEQTQPPPEAPTVPETSDPAGKEDDPGFGDYDYVPTDDYYTPAPYEDLGYGEGVENPDQPTNPDSGAEVPTSTIITSNTSNPAPSPGEDKDDLGGEFTEETIKNLEENYYDPYFDPDSDSNVSPSEIGPGMPANQDTIYEGIGGPRGEKGQKGEPAIIEPGMLIEGPPGPEGPAGLPGPPGTTGPTGQVGDPGERGPPGRPGLPGADGLPGPPGTMLMLPFRFGGGGDAGSKGPMVSAQESQAQAILQQARLALRGPAGPMGLTGRPGPMGPPGSGGLKGEPGDMGPQGPRGVQGPPGPTGKPGRRGRAGSDGARGMPGQTGPKGDRGFDGLAGLPGEKGHRGDPGPSGPPGLPGDDGERGDDGEVGPRGLPGEPGPRGLLGPKGPPGPPGPPGVTGMDGQPGPKGNVGPQGEPGPPGQQGNPGAQGLPGPQGAIGPPGEKGPLGKPGLPGMPGADGPPGHPGKEGPPGEKGGQGPPGPQGPIGYPGPRGVKGADGIRGLKGTKGEKGEDGFPGFKGDMGIKGDRGEIGPPGPRGEDGPEGPKGRGGPNGDPGPLGPTGEKGKLGVPGLPGYPGRQGPKGSIGFPGFPGANGEKGGRGTPGKPGPRGQRGPTGPRGERGPRGITGKPGPKGNSGGDGPAGPPGERGPNGPQGPTGFPGPKGPPGPPGKDGLPGHPGQRGETGFQGKTGPPGPPGVVGPQGPTGETGPMGERGHPGPPGPPGEQGLPGVAGKEGTKGDPGPAGLPGKDGPPGLRGFPGDRGLPGPVGALGLKGSEGPPGPPGPAGSPGERGPAGAAGPIGIPGRPGPQGPPGPAGEKGVPGEKGPQGPAGRDGLQGPVGLPGPAGPVGPPGEDGDKGEIGEPGQKGSKGDKGEQGPPGPTGPQGPIGQPGPSGADGEPGPRGQQGLFGQKGDEGSRGFPGPPGPVGLQGLPGPPGEKGETGDVGQMGPPGPPGPRGPSGAPGADGPQGPPGGIGNPGAVGEKGEPGEAGEPGLPGEGGPLGPKGERGEKGEVGPSGAAGPPGPKGPPGDDGPKGSPGPVGFPGDPGPPGEPGPAGQDGPPGDKGDDGEPGQTGSPGPTGEPGPSGPPGKRGPPGPAGPEGRQGEKGAKGEAGLEGPPGKTGPIGPQGAPGKPGPDGLRGIPGPVGEQGLPGSPGPDGPPGPMGPPGLPGLKGDSGPKGEKGHPGLIGLIGPPGEQGEKGDRGLPGPQGSSGPKGEQGITGPSGPLGPPGPPGLPGPPGPKGAKGSSGPTGPKGEAGHPGLPGPPGPPGEVIQPLPIQASRTRRNIDASQLLDDGAGESYLDYADGMEEIFGSLNSLKLEIEQMKRPLGTQQNPARTCKDLQLCHPDFPDGEYWVDPNQGCSRDSFKVYCNFTAGGSTCVFPDKKSEGARITSWPKENPGSWFSEFKRGKLLSYVDAEGNPVGVVQMTFLRLLSASAHQNITYNCYQSVAWQDAATGSYDKAIRFLGSNDEEMSYDNNPYIRALVDGCATKKGYQKTVLEIDTPKVEQVPIVDIMFNDFGEASQKFGFEVGPACFLG.

The signal sequence occupies residues 1-36 (MDVHTRWKDRLPVGPAAVPPLLLLLLLLWAPPQSRA). Residues 72–244 (DVAYRVSKDA…DYCEHYSPDC (173 aa)) enclose the Laminin G-like domain. Residues 231-445 (RAAYDYCEHY…MPANQDTIYE (215 aa)) form a nonhelical region region. Sulfotyrosine is present on residues Y234, Y236, Y240, Y262, Y263, and Y271. 3 disordered regions span residues 242–523 (PDCD…TMLM), 528–547 (FGGG…QESQ), and 561–1576 (GPAG…EVIQ). The segment covering 258 to 268 (NPDEYYPEGDG) has biased composition (acidic residues). Composition is skewed to low complexity over residues 335 to 352 (DYDY…PYED) and 376 to 386 (TSTIITSNTSN). The interval 446 to 560 (GIGGPRGEKG…ILQQARLALR (115 aa)) is interrupted collagenous region. Positions 472-487 (PPGPEGPAGLPGPPGT) are enriched in pro residues. Over residues 508-523 (LPGADGLPGPPGTMLM) the composition is skewed to low complexity. Residues 561–572 (GPAGPMGLTGRP) are compositionally biased toward low complexity. The triple-helical region stretch occupies residues 561–1572 (GPAGPMGLTG…GLPGPPGPPG (1012 aa)). A 4-hydroxyproline mark is found at P572, P578, and P623. The residue at position 629 (K629) is a 5-hydroxylysine. A 4-hydroxyproline modification is found at P641. At K644 the chain carries 5-hydroxylysine. 5 positions are modified to 4-hydroxyproline: P650, P656, P659, P677, and P680. Positions 673-688 (PRGLPGEPGPRGLLGP) are enriched in low complexity. A 3-hydroxyproline mark is found at P682 and P688. A compositionally biased stretch (pro residues) spans 689-698 (KGPPGPPGPP). 4-hydroxyproline is present on residues P692, P698, and P707. A 5-hydroxylysine modification is found at K710. 4-hydroxyproline is present on residues P719, P722, P728, and P734. Residues 724–743 (QQGNPGAQGLPGPQGAIGPP) are compositionally biased toward low complexity. Position 746 is a 5-hydroxylysine (K746). Low complexity predominate over residues 749–758 (LGKPGLPGMP). 4-hydroxyproline is present on residues P752, P758, P764, P767, and P773. A 5-hydroxylysine modification is found at K776. P782 and P791 each carry 4-hydroxyproline. 5-hydroxylysine occurs at positions 797, 806, 809, and 812. P818 bears the 4-hydroxyproline mark. Position 821 is a 5-hydroxylysine (K821). P836 is subject to 4-hydroxyproline. Basic and acidic residues predominate over residues 839 to 848 (RGEDGPEGPK). A 5-hydroxylysine mark is found at K848 and K866. 4-hydroxyproline occurs at positions 872, 875, and 878. Position 884 is a 5-hydroxylysine (K884). P890 and P893 each carry 4-hydroxyproline. At K899 the chain carries 5-hydroxylysine. A 4-hydroxyproline mark is found at P905 and P908. The span at 910–919 (PRGQRGPTGP) shows a compositional bias: low complexity. A 4-hydroxyproline mark is found at P932 and P947. Composition is skewed to low complexity over residues 973–992 (KDGL…QGKT) and 1001–1013 (VGPQ…TGPM). 4-hydroxyproline is present on residues P1019, P1022, P1025, and P1031. The segment covering 1090 to 1106 (SPGERGPAGAAGPIGIP) has biased composition (low complexity). Positions 1108 to 1117 (RPGPQGPPGP) are enriched in pro residues. A 4-hydroxyproline mark is found at P1223 and P1226. Residues 1261–1270 (PSGAPGADGP) show a composition bias toward low complexity. Residues 1296–1305 (GLPGEGGPLG) show a composition bias toward gly residues. Pro residues-rich tracts occupy residues 1382–1400 (TGEP…PGPA) and 1456–1471 (SPGP…PPGL). P1469 and P1472 each carry 4-hydroxyproline. The span at 1487–1496 (PGLIGLIGPP) shows a compositional bias: low complexity. Pro residues predominate over residues 1528-1543 (PLGPPGPPGLPGPPGP). Over residues 1544 to 1556 (KGAKGSSGPTGPK) the composition is skewed to low complexity. The nonhelical region stretch occupies residues 1573–1607 (EVIQPLPIQASRTRRNIDASQLLDDGAGESYLDYA). 2 positions are modified to sulfotyrosine: Y1603 and Y1606. The Fibrillar collagen NC1 domain occupies 1611-1839 (EEIFGSLNSL…GFEVGPACFL (229 aa)).

The protein belongs to the fibrillar collagen family. In terms of assembly, trimers of two alpha 1(V) and one alpha 2(V) chains in most tissues and trimers of one alpha 1(V), one alpha 2(V), and one alpha 3(V) chains in placenta. Interacts with CSPG4. Hydroxylation on proline residues within the sequence motif, GXPG, is most likely to be 4-hydroxy as this fits the requirement for 4-hydroxylation in vertebrates. Post-translationally, sulfated on 40% of tyrosines. In terms of tissue distribution, ubiquitously expressed.

The protein localises to the secreted. The protein resides in the extracellular space. It is found in the extracellular matrix. Functionally, type V collagen is a member of group I collagen (fibrillar forming collagen). It is a minor connective tissue component of nearly ubiquitous distribution. Type V collagen binds to DNA, heparan sulfate, thrombospondin, heparin, and insulin. The polypeptide is Collagen alpha-1(V) chain (COL5A1) (Cricetulus longicaudatus (Long-tailed dwarf hamster)).